The primary structure comprises 247 residues: Auxin-responsive protein IAA13 (247 aa).

The EAR-like (transcriptional repression) motif lies at leucine 14 to leucine 18. Residues glycine 25 to glycine 40 are compositionally biased toward gly residues. Disordered regions lie at residues glycine 25 to arginine 44 and lysine 49 to valine 119. Over residues serine 62–serine 75 the composition is skewed to low complexity. The span at arginine 87–lysine 98 shows a compositional bias: polar residues. Basic and acidic residues predominate over residues alanine 106 to valine 119. In terms of domain architecture, PB1 spans valine 129–threonine 225.

The protein belongs to the Aux/IAA family. As to quaternary structure, homodimers and heterodimers. Interacts with TPL. Preferentially expressed in stems.

The protein localises to the nucleus. Functionally, aux/IAA proteins are short-lived transcriptional factors that function as repressors of early auxin response genes at low auxin concentrations. Repression is thought to result from the interaction with auxin response factors (ARFs), proteins that bind to the auxin-responsive promoter element (AuxRE). Formation of heterodimers with ARF proteins may alter their ability to modulate early auxin response genes expression. The polypeptide is Auxin-responsive protein IAA13 (IAA13) (Arabidopsis thaliana (Mouse-ear cress)).